The sequence spans 179 residues: Large ribosomal subunit protein uL5 (179 aa).

The protein belongs to the universal ribosomal protein uL5 family. In terms of assembly, part of the 50S ribosomal subunit; part of the 5S rRNA/L5/L18/L25 subcomplex. Contacts the 5S rRNA and the P site tRNA. Forms a bridge to the 30S subunit in the 70S ribosome.

This is one of the proteins that bind and probably mediate the attachment of the 5S RNA into the large ribosomal subunit, where it forms part of the central protuberance. In the 70S ribosome it contacts protein S13 of the 30S subunit (bridge B1b), connecting the 2 subunits; this bridge is implicated in subunit movement. Contacts the P site tRNA; the 5S rRNA and some of its associated proteins might help stabilize positioning of ribosome-bound tRNAs. The sequence is that of Large ribosomal subunit protein uL5 from Verminephrobacter eiseniae (strain EF01-2).